The chain runs to 283 residues: Pantothenate synthetase (283 aa).

30–37 (MGNLHLGH) contacts ATP. Catalysis depends on H37, which acts as the Proton donor. Q61 is a (R)-pantoate binding site. Q61 contributes to the beta-alanine binding site. An ATP-binding site is contributed by 149–152 (GQKD). A (R)-pantoate-binding site is contributed by Q155. ATP-binding positions include I178 and 186–189 (MSSR).

This sequence belongs to the pantothenate synthetase family. As to quaternary structure, homodimer.

It localises to the cytoplasm. It carries out the reaction (R)-pantoate + beta-alanine + ATP = (R)-pantothenate + AMP + diphosphate + H(+). It participates in cofactor biosynthesis; (R)-pantothenate biosynthesis; (R)-pantothenate from (R)-pantoate and beta-alanine: step 1/1. Its function is as follows. Catalyzes the condensation of pantoate with beta-alanine in an ATP-dependent reaction via a pantoyl-adenylate intermediate. The sequence is that of Pantothenate synthetase from Shewanella halifaxensis (strain HAW-EB4).